Consider the following 284-residue polypeptide: 4-diphosphocytidyl-2-C-methyl-D-erythritol kinase (284 aa).

The active site involves K14. 98–108 lines the ATP pocket; sequence PMGGGLGGGSS. The active site involves D140.

It belongs to the GHMP kinase family. IspE subfamily.

The enzyme catalyses 4-CDP-2-C-methyl-D-erythritol + ATP = 4-CDP-2-C-methyl-D-erythritol 2-phosphate + ADP + H(+). It functions in the pathway isoprenoid biosynthesis; isopentenyl diphosphate biosynthesis via DXP pathway; isopentenyl diphosphate from 1-deoxy-D-xylulose 5-phosphate: step 3/6. Functionally, catalyzes the phosphorylation of the position 2 hydroxy group of 4-diphosphocytidyl-2C-methyl-D-erythritol. In Shewanella putrefaciens (strain CN-32 / ATCC BAA-453), this protein is 4-diphosphocytidyl-2-C-methyl-D-erythritol kinase.